Consider the following 262-residue polypeptide: Hydroxyethylthiazole kinase (262 aa).

Met44 is a binding site for substrate. Residues Arg118 and Ser166 each contribute to the ATP site. Residue Gly193 coordinates substrate.

The protein belongs to the Thz kinase family. Mg(2+) serves as cofactor.

The enzyme catalyses 5-(2-hydroxyethyl)-4-methylthiazole + ATP = 4-methyl-5-(2-phosphooxyethyl)-thiazole + ADP + H(+). It participates in cofactor biosynthesis; thiamine diphosphate biosynthesis; 4-methyl-5-(2-phosphoethyl)-thiazole from 5-(2-hydroxyethyl)-4-methylthiazole: step 1/1. In terms of biological role, catalyzes the phosphorylation of the hydroxyl group of 4-methyl-5-beta-hydroxyethylthiazole (THZ). This chain is Hydroxyethylthiazole kinase, found in Chlamydia abortus (strain DSM 27085 / S26/3) (Chlamydophila abortus).